Reading from the N-terminus, the 355-residue chain is MAAQEEPAQPGDSLATLKSESDTLKSKLEEERAKLHDVELHQVAEKIEALGQFVMKTRRTLKGHGNKVLCMDWCKDKRRIVSSSQDGKVIVWDAFTTNKEHAVTMPCTWVMACAYAPSGCAVACGGLDNKCSVYPLSLDKNENLAAKKKSVAMHTNYLSACCFTNSDMQILTSSGDGTCALWDVESGQMLQSFHGHAADVLCLDLAPSETGNTFVSGGCDKKACVWDMRTGQCVQSFESHDSDINSVRYYPSGDAFASGSDDATCRLYDLRADREVAIYSKESIIFGASSVDFSLSGRLLFGGYNDYTINVWDVLKGARVSILFGHENRVSTLRVSPDGTAFCSGSWDHTLRIWA.

The interval 1-23 is disordered; that stretch reads MAAQEEPAQPGDSLATLKSESDT. WD repeat units follow at residues 63-102, 105-144, 153-194, 195-238, 239-278, 280-322, and 325-355; these read GHGNKVLCMDWCKDKRRIVSSSQDGKVIVWDAFTTNKEHA, MPCTWVMACAYAPSGCAVACGGLDNKCSVYPLSLDKNENL, MHTN…QSFH, GHAA…QSFE, SHDSDINSVRYYPSGDAFASGSDDATCRLYDLRADREVAI, SKES…RVSI, and GHENRVSTLRVSPDGTAFCSGSWDHTLRIWA.

This sequence belongs to the WD repeat G protein beta family. In terms of assembly, may interact with RGS9; this interaction stabilizes both proteins and increases RGS9 GTPase-activating protein (GAP) activity, hence accelerating the deactivation of D(2) dopamine receptor-mediated signaling.

It localises to the membrane. In terms of biological role, enhances GTPase-activating protein (GAP) activity of regulator of G protein signaling (RGS) proteins, such as RGS7 and RGS9, hence involved in the termination of the signaling initiated by the G protein coupled receptors (GPCRs) by accelerating the GTP hydrolysis on the G-alpha subunits, thereby promoting their inactivation. Increases RGS7 GTPase-activating protein (GAP) activity, thereby regulating mood and cognition. Increases RGS9 GTPase-activating protein (GAP) activity, hence contributes to the deactivation of G protein signaling initiated by D(2) dopamine receptors. Along with gnb5b, plays an important role in neuronal signaling, including in the parasympathetic, but not sympathetic, control of heart rate. The chain is Guanine nucleotide-binding protein subunit beta-5a from Danio rerio (Zebrafish).